The chain runs to 273 residues: NH(3)-dependent NAD(+) synthetase (273 aa).

An ATP-binding site is contributed by 34 to 41; it reads GLSGGIDS. Residue Asp40 participates in Mg(2+) binding. A deamido-NAD(+)-binding site is contributed by Arg116. Residue Thr136 coordinates ATP. Residue Glu141 coordinates Mg(2+). Residues Lys165 and Ser187 each contribute to the ATP site.

This sequence belongs to the NAD synthetase family. Homodimer.

It catalyses the reaction deamido-NAD(+) + NH4(+) + ATP = AMP + diphosphate + NAD(+) + H(+). It functions in the pathway cofactor biosynthesis; NAD(+) biosynthesis; NAD(+) from deamido-NAD(+) (ammonia route): step 1/1. In terms of biological role, catalyzes the ATP-dependent amidation of deamido-NAD to form NAD. Uses ammonia as a nitrogen source. This chain is NH(3)-dependent NAD(+) synthetase, found in Trichlorobacter lovleyi (strain ATCC BAA-1151 / DSM 17278 / SZ) (Geobacter lovleyi).